Consider the following 217-residue polypeptide: ATP phosphoribosyltransferase (217 aa).

It belongs to the ATP phosphoribosyltransferase family. Short subfamily. In terms of assembly, heteromultimer composed of HisG and HisZ subunits.

The protein resides in the cytoplasm. It carries out the reaction 1-(5-phospho-beta-D-ribosyl)-ATP + diphosphate = 5-phospho-alpha-D-ribose 1-diphosphate + ATP. It functions in the pathway amino-acid biosynthesis; L-histidine biosynthesis; L-histidine from 5-phospho-alpha-D-ribose 1-diphosphate: step 1/9. In terms of biological role, catalyzes the condensation of ATP and 5-phosphoribose 1-diphosphate to form N'-(5'-phosphoribosyl)-ATP (PR-ATP). Has a crucial role in the pathway because the rate of histidine biosynthesis seems to be controlled primarily by regulation of HisG enzymatic activity. In Burkholderia vietnamiensis (strain G4 / LMG 22486) (Burkholderia cepacia (strain R1808)), this protein is ATP phosphoribosyltransferase.